A 163-amino-acid chain; its full sequence is Putative 4-hydroxy-4-methyl-2-oxoglutarate aldolase (163 aa).

Residues 76–79 (GDML) and R98 each bind substrate. Residue D99 participates in a divalent metal cation binding.

It belongs to the class II aldolase/RraA-like family. In terms of assembly, homotrimer. Requires a divalent metal cation as cofactor.

It carries out the reaction 4-hydroxy-4-methyl-2-oxoglutarate = 2 pyruvate. It catalyses the reaction oxaloacetate + H(+) = pyruvate + CO2. Its function is as follows. Catalyzes the aldol cleavage of 4-hydroxy-4-methyl-2-oxoglutarate (HMG) into 2 molecules of pyruvate. Also contains a secondary oxaloacetate (OAA) decarboxylase activity due to the common pyruvate enolate transition state formed following C-C bond cleavage in the retro-aldol and decarboxylation reactions. The protein is Putative 4-hydroxy-4-methyl-2-oxoglutarate aldolase of Pseudomonas putida (strain W619).